The primary structure comprises 106 residues: Thioredoxin (106 aa).

Residues 2–106 (VQVISNLDEF…LESLVQKSLA (105 aa)) form the Thioredoxin domain. Active-site nucleophile residues include Cys30 and Cys33. Cysteines 30 and 33 form a disulfide.

The protein belongs to the thioredoxin family.

Participates in various redox reactions through the reversible oxidation of its active center dithiol to a disulfide and catalyzes dithiol-disulfide exchange reactions. The polypeptide is Thioredoxin (Coprinus comatus (Shaggy mane)).